We begin with the raw amino-acid sequence, 994 residues long: Sarcoplasmic/endoplasmic reticulum calcium ATPase 1 (994 aa).

The Cytoplasmic segment spans residues 1–48; the sequence is MENAHAKTAEECLAFFGVNESVGLSGEQVRRALEKYGHNELPAEEGKT. A helical transmembrane segment spans residues 49-69; that stretch reads IWELVVEQFEDLLVRILLLAA. The Lumenal portion of the chain corresponds to 70-89; sequence CISFVLAWFEEGEETITAFV. A helical transmembrane segment spans residues 90–110; the sequence is EPFVILLILIANAVVGVWQER. Residues 111-253 lie on the Cytoplasmic side of the membrane; sequence NAENAIEALK…QDKTPLQQKL (143 aa). The chain crosses the membrane as a helical span at residues 254–273; the sequence is DEFGEQLSKVISLICVAVWL. Topologically, residues 274–295 are lumenal; the sequence is INIGHFNDPVHGGSWIRGAIYY. The helical transmembrane segment at 296-313 threads the bilayer; the sequence is FKIAVALAVAAIPEGLPA. Ca(2+)-binding residues include Val304, Ala305, Ile307, and Glu309. Over 314–757 the chain is Cytoplasmic; that stretch reads VITTCLALGT…EEGRAIYNNM (444 aa). The active-site 4-aspartylphosphate intermediate is the Asp351. Asp351 and Thr353 together coordinate Mg(2+). ATP is bound by residues Thr353, Glu442, Arg489, Lys515, Arg560, Thr625, Gly626, Asp627, Arg678, and Lys684. Asp703 contacts Mg(2+). Residue Asn706 coordinates ATP. The helical transmembrane segment at 758–777 threads the bilayer; that stretch reads KQFIRYLISSNVGEVVCIFL. Residues Asn768 and Glu771 each contribute to the Ca(2+) site. Over 778 to 787 the chain is Lumenal; the sequence is TAALGLPEAL. A helical membrane pass occupies residues 788-808; that stretch reads IPVQLLWVNLVTDGLPATALG. The interval 788-808 is interaction with PLN; that stretch reads IPVQLLWVNLVTDGLPATALG. The Ca(2+) site is built by Asn796, Thr799, and Asp800. Residues 809 to 828 lie on the Cytoplasmic side of the membrane; the sequence is FNPPDLDIMDKPPRSPKEPL. A helical transmembrane segment spans residues 829–851; the sequence is ISGWLFFRYLAIGGYVGAATVGA. Residues 852–897 lie on the Lumenal side of the membrane; it reads AAWWFLYAEDGPSLTYHQLTHFMQCTHHNAEFEGVDCDIFESPVPM. A disulfide bridge links Cys876 with Cys888. A helical membrane pass occupies residues 898 to 917; sequence TMALSVLVTIEMCNALNSLS. Residue Glu908 coordinates Ca(2+). Residues 918 to 930 are Cytoplasmic-facing; it reads ENQSLLRMPPWVN. The helical transmembrane segment at 931-949 threads the bilayer; the sequence is IWLVGSICLSMSLHFVILY. The tract at residues 932 to 943 is interaction with PLN; sequence WLVGSICLSMSL. Topologically, residues 950 to 964 are lumenal; sequence VDPLPMIFKLTHLDL. Residues 965 to 985 traverse the membrane as a helical segment; sequence AHWLVVLRISFPVILLDEALK. The Cytoplasmic segment spans residues 986–994; it reads FVARNYLEA.

It belongs to the cation transport ATPase (P-type) (TC 3.A.3) family. Type IIA subfamily. As to quaternary structure, interacts with sarcolipin (SLN). Interacts with phospholamban (PLN). Interacts with myoregulin (MRLN). Interacts with DWORF. It depends on Mg(2+) as a cofactor.

It is found in the endoplasmic reticulum membrane. It localises to the sarcoplasmic reticulum membrane. The enzyme catalyses Ca(2+)(in) + ATP + H2O = Ca(2+)(out) + ADP + phosphate + H(+). Its activity is regulated as follows. Inhibited by sarcolipin (SLN) and myoregulin (MRLN). Also shown to be inhibited by phospholamban (PLN) in vitro. Enhanced by DWORF; DWORF increases activity by displacing sarcolipin (SLN), phospholamban (PLN) and myoregulin (MRLN). Functionally, key regulator of striated muscle performance by acting as the major Ca(2+) ATPase responsible for the reuptake of cytosolic Ca(2+) into the sarcoplasmic reticulum. Catalyzes the hydrolysis of ATP coupled with the translocation of calcium from the cytosol to the sarcoplasmic reticulum lumen. Contributes to calcium sequestration involved in muscular excitation/contraction. The protein is Sarcoplasmic/endoplasmic reticulum calcium ATPase 1 (ATP2A1) of Gallus gallus (Chicken).